A 347-amino-acid polypeptide reads, in one-letter code: Dihydroorotase (347 aa).

Zn(2+) is bound by residues His-14 and His-16. Substrate-binding positions include 16 to 18 (HLR) and Asn-42. Positions 100, 137, and 175 each coordinate Zn(2+). Lys-100 bears the N6-carboxylysine mark. A substrate-binding site is contributed by His-137. Leu-220 is a binding site for substrate. Asp-248 provides a ligand contact to Zn(2+). Asp-248 is a catalytic residue. Residues His-252 and Ala-264 each contribute to the substrate site.

The protein belongs to the metallo-dependent hydrolases superfamily. DHOase family. Class II DHOase subfamily. As to quaternary structure, homodimer. Zn(2+) serves as cofactor.

It catalyses the reaction (S)-dihydroorotate + H2O = N-carbamoyl-L-aspartate + H(+). The protein operates within pyrimidine metabolism; UMP biosynthesis via de novo pathway; (S)-dihydroorotate from bicarbonate: step 3/3. Its function is as follows. Catalyzes the reversible cyclization of carbamoyl aspartate to dihydroorotate. This is Dihydroorotase from Jannaschia sp. (strain CCS1).